The chain runs to 224 residues: uncharacterized protein (224 aa).

This is an uncharacterized protein from Acidianus hospitalis (AFV-1).